A 111-amino-acid polypeptide reads, in one-letter code: Glucosamine 6-phosphate N-acetyltransferase (111 aa).

Residues 1–111 (MKKDFHSTYY…MKKYASHSII (111 aa)) enclose the N-acetyltransferase domain. Residues 33–36 (KFLR) and 45–47 (EEV) each bind substrate. Residues 47–49 (VIV) and 55–60 (RKAIGK) contribute to the acetyl-CoA site. Substrate-binding positions include 76 to 77 (YK) and aspartate 81. 90–92 (YEK) contributes to the acetyl-CoA binding site.

Belongs to the acetyltransferase family. GNA1 subfamily.

It carries out the reaction D-glucosamine 6-phosphate + acetyl-CoA = N-acetyl-D-glucosamine 6-phosphate + CoA + H(+). The protein operates within nucleotide-sugar biosynthesis; UDP-N-acetyl-alpha-D-glucosamine biosynthesis; N-acetyl-alpha-D-glucosamine 1-phosphate from alpha-D-glucosamine 6-phosphate (route I): step 1/2. The sequence is that of Glucosamine 6-phosphate N-acetyltransferase (gna1) from Schizosaccharomyces pombe (strain 972 / ATCC 24843) (Fission yeast).